A 251-amino-acid chain; its full sequence is Hydroxyacylglutathione hydrolase (251 aa).

H53, H55, D57, H58, H110, D127, and H165 together coordinate Zn(2+).

Belongs to the metallo-beta-lactamase superfamily. Glyoxalase II family. In terms of assembly, monomer. It depends on Zn(2+) as a cofactor.

The enzyme catalyses an S-(2-hydroxyacyl)glutathione + H2O = a 2-hydroxy carboxylate + glutathione + H(+). It functions in the pathway secondary metabolite metabolism; methylglyoxal degradation; (R)-lactate from methylglyoxal: step 2/2. Its function is as follows. Thiolesterase that catalyzes the hydrolysis of S-D-lactoyl-glutathione to form glutathione and D-lactic acid. The protein is Hydroxyacylglutathione hydrolase of Salmonella agona (strain SL483).